A 534-amino-acid polypeptide reads, in one-letter code: MTLQTEMEAALEVAALNREMLIILDFGSQYSELIARRIRETQVYSEVLSYRTTADQIRQLSPKGIILSGGPNSVYDDYAPVCDPEIWNLGIPVLGVCYGMQLMVQQLGGQVDRAERGEYGKAALVIDDPTDLLTNVEPGSTMWMSHGDSVKTMPEGFELLAHTDNTPCAAIADHQRKFYGVQFHPEVVHSVHGMALIRNFVYHICDCEPTWTTETFVEEAIREIRARVGDKRVLLALSGGVDSSTLAFLLHRAIGDQLTCMFIDQGFMRKGEPERLMEVFNEKFKIHVEYIQARDRFLQRLEGITDPEEKRKRIGHEFIRVFEEESRRLGPFDYLAQGTLYPDVIESADTNVDPKTGERVAVKIKSHHNVGGLPKDLQFKLVEPLRRLFKDEVRQVGRSLGLPEEIVKRHPFPGPGLAIRILGEVTAEKLNILRDADLIVRQEVNRQGYYDEFWQAFAVLLPVKSVGVMGDKRTYAYPVVLRFVSSEDGMTADWSRAPYDLLETISNRIVNEVKGVNRVVYDITSKPPGTIEWE.

The 191-residue stretch at Met-20–Thr-210 folds into the Glutamine amidotransferase type-1 domain. The active-site Nucleophile is Cys-97. Active-site residues include His-184 and Glu-186. A GMPS ATP-PPase domain is found at Trp-211–Arg-409. Ser-238–Ser-244 is a binding site for ATP.

Homodimer.

The enzyme catalyses XMP + L-glutamine + ATP + H2O = GMP + L-glutamate + AMP + diphosphate + 2 H(+). The protein operates within purine metabolism; GMP biosynthesis; GMP from XMP (L-Gln route): step 1/1. In terms of biological role, catalyzes the synthesis of GMP from XMP. The polypeptide is GMP synthase [glutamine-hydrolyzing] (Synechococcus sp. (strain ATCC 27144 / PCC 6301 / SAUG 1402/1) (Anacystis nidulans)).